A 406-amino-acid chain; its full sequence is MRLFQSTCVLVGTVLPLFTAFPISSPREIEIIPDKYIITFKKGIDQAAIEAHTAWVSSVQARNTARGFTTAETPGLERMFSIHNFNAYSGSFDRETIEEIRSHPNVESVEPDSMAYVTELIEQRNATYGPRRISHREIPTGDNSYWYDSKAGEGSFVYIMDTGINKAHVDFEGRAIPGVNLHDVAFDDTHGHGSHCAGIAGSKTYGVAKKATIVDVKVFTRGGGAWSLLMGGLDWSVKNITGEDRQAKSAVSISISGPTNQAMNNAVKAAVEAGVTVVVASGNDGRDAGRNSPGSAPESITVGSINSRRGMDTRSSFSNYGSSVAIHAPGEGIISTYKGSRDATANMSGTSMAAPHVAGLIAYLQSIHDLPDPAAARRKLLELATSDKIQDVRGSANKLAYNGSGK.

The N-terminal stretch at 1 to 20 is a signal peptide; sequence MRLFQSTCVLVGTVLPLFTA. Residues 21 to 118 constitute a propeptide that is removed on maturation; that stretch reads FPISSPREIE…VEPDSMAYVT (98 aa). Positions 35–115 constitute an Inhibitor I9 domain; the sequence is KYIITFKKGI…VESVEPDSMA (81 aa). N-linked (GlcNAc...) asparagine glycosylation occurs at asparagine 125. Positions 127 to 406 constitute a Peptidase S8 domain; it reads TYGPRRISHR…NKLAYNGSGK (280 aa). Residues aspartate 161 and histidine 192 each act as charge relay system in the active site. Asparagine 239 carries an N-linked (GlcNAc...) asparagine glycan. The interval 283-309 is disordered; that stretch reads NDGRDAGRNSPGSAPESITVGSINSRR. The N-linked (GlcNAc...) asparagine glycan is linked to asparagine 346. The active-site Charge relay system is the serine 351. N-linked (GlcNAc...) asparagine glycosylation is present at asparagine 402.

It belongs to the peptidase S8 family.

The protein localises to the secreted. Its function is as follows. Secreted subtilisin-like serine protease with keratinolytic activity that contributes to pathogenicity. The polypeptide is Subtilisin-like protease CPC735_023170 (Coccidioides posadasii (strain C735) (Valley fever fungus)).